Here is a 340-residue protein sequence, read N- to C-terminus: Glycerol-3-phosphate dehydrogenase [NAD(P)+] (340 aa).

NADPH is bound by residues serine 13, tryptophan 14, and lysine 108. Lysine 108, glycine 139, and serine 141 together coordinate sn-glycerol 3-phosphate. Alanine 143 is an NADPH binding site. 5 residues coordinate sn-glycerol 3-phosphate: lysine 194, aspartate 247, serine 257, arginine 258, and asparagine 259. Lysine 194 serves as the catalytic Proton acceptor. Arginine 258 is an NADPH binding site. The NADPH site is built by valine 282 and glutamate 284.

The protein belongs to the NAD-dependent glycerol-3-phosphate dehydrogenase family.

The protein localises to the cytoplasm. The catalysed reaction is sn-glycerol 3-phosphate + NAD(+) = dihydroxyacetone phosphate + NADH + H(+). It catalyses the reaction sn-glycerol 3-phosphate + NADP(+) = dihydroxyacetone phosphate + NADPH + H(+). Its pathway is membrane lipid metabolism; glycerophospholipid metabolism. Its function is as follows. Catalyzes the reduction of the glycolytic intermediate dihydroxyacetone phosphate (DHAP) to sn-glycerol 3-phosphate (G3P), the key precursor for phospholipid synthesis. This is Glycerol-3-phosphate dehydrogenase [NAD(P)+] from Streptococcus thermophilus (strain ATCC BAA-491 / LMD-9).